The following is an 89-amino-acid chain: Small ribosomal subunit protein uS14A (89 aa).

This sequence belongs to the universal ribosomal protein uS14 family. In terms of assembly, part of the 30S ribosomal subunit. Contacts proteins S3 and S10.

Functionally, binds 16S rRNA, required for the assembly of 30S particles and may also be responsible for determining the conformation of the 16S rRNA at the A site. The sequence is that of Small ribosomal subunit protein uS14A from Staphylococcus haemolyticus (strain JCSC1435).